The chain runs to 505 residues: MAADWLGSIVSINCGNTLGVYQGCVSAVDRINQTISLSQPFHNGVKCLVPEVTFRAGDISELKILEIPSESLKYTSDQLNDHSTGFGYLPTRQQNGTGKQKQTVAHNSAQNIPGQEEGKASEPSSTSPQPCSKSFVDRHNEAVNQPKNFRRRHNSLGSSSSRYPNQVTPKKSGTKNGQLKARDDECFGDELEEIPDTDFDFEGNLALFDKAAVFEEIDTHERRGGGGTRSRGTPNERPPTYRHDENILESEPIVYRKIVVPQSGGQEYCTDSGLVVPSISYVLHKKLLCVAEKHGLSVERRLEMSGVCASQMALTLLGGPNRLNPKNVHQRPTVALLCGPHVKGAQGISCGRHLANYDVDIILFLPNFVKMLEPVTNELNLFCQTQGKQVSSVKDLPECPVDLVINCLDCNENAFLCDQPWYRAAVDWANHNRAPVLNIDPPVGDHVQGIHAKWSLELGLPLALGEQAGRIYLCDIGIPQKVFREVGISYHSPFGCKFVIPLHSM.

Positions 1-68 (MAADWLGSIV…ISELKILEIP (68 aa)) constitute a Sm domain. Residues 1-79 (MAADWLGSIV…ESLKYTSDQL (79 aa)) are required for P-body targeting and interaction with DCP1A. Disordered regions lie at residues 84–181 (TGFG…QLKA) and 219–243 (THER…TYRH). Polar residues-rich tracts occupy residues 91 to 113 (TRQQ…QNIP), 122 to 132 (EPSSTSPQPCS), and 155 to 177 (SLGS…TKNG). Positions 186–293 (CFGDELEEIP…HKKLLCVAEK (108 aa)) are required for interaction with DDX6. The 37-residue stretch at 187–223 (FGDELEEIPDTDFDFEGNLALFDKAAVFEEIDTHERR) folds into the DFDF domain. Positions 280–484 (SYVLHKKLLC…DIGIPQKVFR (205 aa)) constitute a YjeF N-terminal domain.

This sequence belongs to the EDC3 family.

Its subcellular location is the cytoplasm. It is found in the P-body. Functionally, binds single-stranded RNA. Involved in the process of mRNA degradation and in the positive regulation of mRNA decapping. This Xenopus laevis (African clawed frog) protein is Enhancer of mRNA-decapping protein 3 (edc3).